The sequence spans 461 residues: Bifunctional protein GlmU (461 aa).

The pyrophosphorylase stretch occupies residues 1-229; sequence MLKKEINVVI…CKEILGVNNK (229 aa). UDP-N-acetyl-alpha-D-glucosamine-binding positions include 11–14, Lys-25, Gln-76, 81–82, 103–105, Gly-140, Glu-154, and Asn-227; these read LAAG, GT, and YGD. Residue Asp-105 coordinates Mg(2+). Asn-227 contacts Mg(2+). Residues 230-250 form a linker region; that stretch reads LQLSILEKIFRKKQVNDLLLS. An N-acetyltransferase region spans residues 251–461; that stretch reads GVTLKDPNHF…PQKIIKKTDQ (211 aa). Residues Arg-333 and Lys-351 each coordinate UDP-N-acetyl-alpha-D-glucosamine. Residue His-363 is the Proton acceptor of the active site. 2 residues coordinate UDP-N-acetyl-alpha-D-glucosamine: Tyr-366 and Asn-377. Acetyl-CoA is bound by residues Ala-380, 386-387, and Ala-423; that span reads NY.

This sequence in the N-terminal section; belongs to the N-acetylglucosamine-1-phosphate uridyltransferase family. It in the C-terminal section; belongs to the transferase hexapeptide repeat family. In terms of assembly, homotrimer. Mg(2+) is required as a cofactor.

The protein resides in the cytoplasm. The catalysed reaction is alpha-D-glucosamine 1-phosphate + acetyl-CoA = N-acetyl-alpha-D-glucosamine 1-phosphate + CoA + H(+). The enzyme catalyses N-acetyl-alpha-D-glucosamine 1-phosphate + UTP + H(+) = UDP-N-acetyl-alpha-D-glucosamine + diphosphate. The protein operates within nucleotide-sugar biosynthesis; UDP-N-acetyl-alpha-D-glucosamine biosynthesis; N-acetyl-alpha-D-glucosamine 1-phosphate from alpha-D-glucosamine 6-phosphate (route II): step 2/2. It participates in nucleotide-sugar biosynthesis; UDP-N-acetyl-alpha-D-glucosamine biosynthesis; UDP-N-acetyl-alpha-D-glucosamine from N-acetyl-alpha-D-glucosamine 1-phosphate: step 1/1. Its pathway is bacterial outer membrane biogenesis; LPS lipid A biosynthesis. Its function is as follows. Catalyzes the last two sequential reactions in the de novo biosynthetic pathway for UDP-N-acetylglucosamine (UDP-GlcNAc). The C-terminal domain catalyzes the transfer of acetyl group from acetyl coenzyme A to glucosamine-1-phosphate (GlcN-1-P) to produce N-acetylglucosamine-1-phosphate (GlcNAc-1-P), which is converted into UDP-GlcNAc by the transfer of uridine 5-monophosphate (from uridine 5-triphosphate), a reaction catalyzed by the N-terminal domain. In Buchnera aphidicola subsp. Schizaphis graminum (strain Sg), this protein is Bifunctional protein GlmU.